Here is a 197-residue protein sequence, read N- to C-terminus: MPIPASPLHPPLPSLLLYLLLELAGVTHVFHVQQTEMSQTVSTGESIILSCSVPNTLPNGPVLWFKGTGPNRKLIYNFKQGNFPRVKEIGDTTKPGNTDFSTRIREISLADAGTYYCVKFIKGRAIKEYQSGRGTQVFVTEQNPRPPKNRPAGRAGSRAHHDAHTCLSALPERNSTNYFVQPCCCLRLLGLTGLLSK.

A signal peptide spans 1-29 (MPIPASPLHPPLPSLLLYLLLELAGVTHV). The Ig-like V-type domain occupies 31 to 135 (HVQQTEMSQT…IKEYQSGRGT (105 aa)). A disulfide bridge links C51 with C117. Residues 139–158 (VTEQNPRPPKNRPAGRAGSR) form a disordered region. N174 carries N-linked (GlcNAc...) asparagine glycosylation.

It localises to the secreted. This chain is Signal-regulatory protein delta (SIRPD), found in Homo sapiens (Human).